We begin with the raw amino-acid sequence, 671 residues long: Bifunctional acetylxylan esterase/xylanase XynS20E (671 aa).

A signal peptide spans 1–19 (MRLGVALSTIAVLLTATSA). Positions 54–279 (QGAGRDIHVY…IQDIWDFVSQ (226 aa)) are acetylxylan esterase. Catalysis depends on Ser152, which acts as the Charge relay system. Asn238 carries N-linked (GlcNAc...) asparagine glycosylation. The tract at residues 285–328 (PVSASGNGGGNTTPTNPSTGGNGNGNGGGNTTPTNPSTGGNGNG) is disordered. The segment covering 304 to 314 (GGNGNGNGGGN) has biased composition (gly residues). 2 CBM10 domains span residues 335-374 (KCSSNITKQGYKCCASNCEVVYTDSDGDWGVENDQWCGCG) and 383-422 (TCSAKILQQGYKCCPSGCIIYYTDEDGTWGVNGEEWCGCG). N-linked (GlcNAc...) asparagine glycosylation occurs at Asn339. Residues Asn445 and Asn483 are each glycosylated (N-linked (GlcNAc...) asparagine). The 201-residue stretch at 461 to 661 (TVTSNKVGDI…NNGGTSGTAD (201 aa)) folds into the GH11 domain. The active-site Nucleophile is Glu555. The Proton donor role is filled by Glu648.

In the N-terminal section; belongs to the axeA family. It in the C-terminal section; belongs to the glycosyl hydrolase 11 (cellulase G) family.

The protein resides in the secreted. It carries out the reaction Deacetylation of xylans and xylo-oligosaccharides.. It catalyses the reaction Endohydrolysis of (1-&gt;4)-beta-D-xylosidic linkages in xylans.. It functions in the pathway glycan degradation; xylan degradation. Bifunctional acetylxylan esterase/xylanase involved in the hydrolysis of xylan, a major structural heterogeneous polysaccharide found in plant biomass representing the second most abundant polysaccharide in the biosphere, after cellulose. Degrades xylan from acetylxylan, beechwood, birchwood, and oat spelt, and releases acetate from 4-methylumbelliferyl acetate and beta-D-xylose tetraacetate. No activity is observed against carboxy methyl cellulose, beta-glucan, p-nitrophenol acetate, p-nitrophenol laurate, p-nitrophenol myristate, p-nitrophenol, palmitate, or beta-naphthol acetate. This is Bifunctional acetylxylan esterase/xylanase XynS20E (xynS20E) from Neocallimastix patriciarum (Rumen fungus).